Here is a 300-residue protein sequence, read N- to C-terminus: GTPase Era (300 aa).

The region spanning 7-175 (YCGFIAIVGR…EKFVRESLKE (169 aa)) is the Era-type G domain. A G1 region spans residues 15 to 22 (GRPNVGKS). 15–22 (GRPNVGKS) is a GTP binding site. Residues 41 to 45 (QTTRH) are G2. Residues 62 to 65 (DTPG) are G3. Residues 62 to 66 (DTPGL) and 124 to 127 (NKVD) each bind GTP. The G4 stretch occupies residues 124–127 (NKVD). Residues 154 to 156 (ISA) form a G5 region. The region spanning 206–283 (MGEELPYSVT…HLELWVKVKA (78 aa)) is the KH type-2 domain.

It belongs to the TRAFAC class TrmE-Era-EngA-EngB-Septin-like GTPase superfamily. Era GTPase family. As to quaternary structure, monomer.

The protein resides in the cytoplasm. It localises to the cell inner membrane. An essential GTPase that binds both GDP and GTP, with rapid nucleotide exchange. Plays a role in 16S rRNA processing and 30S ribosomal subunit biogenesis and possibly also in cell cycle regulation and energy metabolism. In Glaesserella parasuis serovar 5 (strain SH0165) (Haemophilus parasuis), this protein is GTPase Era.